A 56-amino-acid chain; its full sequence is Large ribosomal subunit protein bL32 (56 aa).

The protein belongs to the bacterial ribosomal protein bL32 family.

This is Large ribosomal subunit protein bL32 from Prochlorococcus marinus (strain MIT 9215).